A 522-amino-acid polypeptide reads, in one-letter code: Maturase K (522 aa).

It belongs to the intron maturase 2 family. MatK subfamily.

The protein resides in the plastid. Its subcellular location is the chloroplast. In terms of biological role, usually encoded in the trnK tRNA gene intron. Probably assists in splicing its own and other chloroplast group II introns. The protein is Maturase K of Iris danfordiae (Danford iris).